The following is a 282-amino-acid chain: Complement component 1 Q subcomponent-binding protein, mitochondrial (282 aa).

Residues 1–70 (MLPLLRCVPR…PRGPCACGCG (70 aa)) constitute a mitochondrion transit peptide. The tract at residues 76 to 93 (TEGDKAFVDFLNDEIKEE) is C1q binding. At Lys91 the chain carries N6-acetyllysine. Residues 137–163 (NSIPPTFDGEEEPTQGQKVEEQEPELT) form a disordered region. An interaction with MAVS region spans residues 168–213 (FVVEVIKNDDGKKALVLDCHYPEDEVGQEDEAESDIFSIREVSFQS). Phosphotyrosine is present on Tyr188. A phosphoserine mark is found at Ser201 and Ser205.

This sequence belongs to the MAM33 family. In terms of assembly, homotrimer; three monomers form a donut-shaped structure with an unusually asymmetric charge distribution on the surface. Interacts with CDK13, HRK, VTN, NFYB, ADRA1B, FOXC1, DDX21, DDX50, NCL, SRSF1 and SRSF9. Interacts with CD93; the association may represent a cell surface C1q receptor. Interacts with KRT1; the association represents a cell surface kininogen receptor. Interacts with CD209; the interaction is indicative for a C1q:C1QBP:CD209 signaling complex. Interacts with FBL and RRP1; the respective interactions with C1QBP are competitive. Probably associates with the mitoribosome. Interacts with MAVS; the interaction occurs upon viral transfection. Interacts with PPIF. Interacts with U2AF1L4. Interacts with PLEKHN1. Interacts with VGF-derived peptide TLQP-21. Interacts with MRE11 and RAD50; forming the MRC (MRE11-RAD50-C1QBP) complex that inhibits the activity of MRE11. (Microbial infection) Interacts with Rubella virus capsid protein; the interaction occurs in mitochondria. As to quaternary structure, (Microbial infection) Interacts with L.monocytogenes InlB.

Its subcellular location is the mitochondrion matrix. It is found in the nucleus. The protein resides in the cell membrane. The protein localises to the secreted. It localises to the cytoplasm. Its subcellular location is the nucleolus. Its function is as follows. Multifunctional and multicompartmental protein involved in inflammation and infection processes, ribosome biogenesis, protein synthesis in mitochondria, regulation of apoptosis, transcriptional regulation and pre-mRNA splicing. At the cell surface is thought to act as an endothelial receptor for plasma proteins of the complement and kallikrein-kinin cascades. Putative receptor for C1q; specifically binds to the globular 'heads' of C1q thus inhibiting C1; may perform the receptor function through a complex with C1qR/CD93. In complex with cytokeratin-1/KRT1 is a high affinity receptor for kininogen-1/HMWK. Can also bind other plasma proteins, such as coagulation factor XII leading to its autoactivation. May function to bind initially fluid kininogen-1 to the cell membrane. The secreted form may enhance both extrinsic and intrinsic coagulation pathways. It is postulated that the cell surface form requires docking with transmembrane proteins for downstream signaling which might be specific for a cell-type or response. By acting as C1q receptor is involved in chemotaxis of immature dendritic cells and neutrophils and is proposed to signal through CD209/DC-SIGN on immature dendritic cells, through integrin alpha-4/beta-1 during trophoblast invasion of the decidua, and through integrin beta-1 during endothelial cell adhesion and spreading. Signaling involved in inhibition of innate immune response is implicating the PI3K-AKT/PKB pathway. Required for protein synthesis in mitochondria. In mitochondrial translation may be involved in formation of functional 55S mitoribosomes; the function seems to involve its RNA-binding activity. Acts as a RNA modification reader, which specifically recognizes and binds mitochondrial RNAs modified by C5-methylcytosine (m5C) in response to stress, and promotes recruitment of the mitochondrial degradosome complex, leading to their degradation. May be involved in the nucleolar ribosome maturation process; the function may involve the exchange of FBL for RRP1 in the association with pre-ribosome particles. Involved in regulation of RNA splicing by inhibiting the RNA-binding capacity of SRSF1 and its phosphorylation. Is required for the nuclear translocation of splicing factor U2AF1L4. Involved in regulation of CDKN2A- and HRK-mediated apoptosis. Stabilizes mitochondrial CDKN2A isoform smARF. May be involved in regulation of FOXC1 transcriptional activity and NFY/CCAAT-binding factor complex-mediated transcription. May play a role in antibacterial defense as it can bind to cell surface hyaluronan and inhibit Streptococcus pneumoniae hyaluronate lyase. May be involved in modulation of the immune response; ligation by HCV core protein is resulting in suppression of interleukin-12 production in monocyte-derived dendritic cells. Involved in regulation of antiviral response by inhibiting RIGI- and IFIH1-mediated signaling pathways probably involving its association with MAVS after viral infection. Acts as a regulator of DNA repair via homologous recombination by inhibiting the activity of MRE11: interacts with unphosphorylated MRE11 and RAD50 in absence of DNA damage, preventing formation and activity of the MRN complex. Following DNA damage, dissociates from phosphorylated MRE11, allowing formation of the MRN complex. In terms of biological role, (Microbial infection) During bacterial infection processes acts as an attachment site for microbial proteins, including Listeria monocytogenes internalin B (InlB). The chain is Complement component 1 Q subcomponent-binding protein, mitochondrial (C1QBP) from Chlorocebus aethiops (Green monkey).